Here is a 753-residue protein sequence, read N- to C-terminus: MVGSLEVSKPPEHKVESKIVIADEEEEDENDSPIEEVRLTVPITDDPSLPVLTFRTWFLGMVSCVVLAFVNNFFGYRSNPLTVSSVVAQIITLPLGKLMATTLPTTKLRLPGTNWSCSLNPGPFNMKEHVLITIFANTGAGGAYATSILTIVKAFYHRNLNPAAAMLLVQTTQLLGYGWAGMFRKYLVDSPYMWWPANLVQVSLFRALHEKEEKREGKQTKLRFFLIVFFLSFTYYIVPGYLFPSISYLSFVCWIWTRSVTAQQIGSGLHGLGIGSFGLDWSTVAGFLGSPLAVPFFAIANSFGGFIIFFYIILPIFYWSNAYEAKKFPFYTSHPFDHTGQRYNTTRILNQKTFNIDLPAYESYSKLYLSILFALIYGLSFGTLTATISHVALFDGKFIWELWKKATLTTKDKFGDVHTRLMKKNYKEVPQWWFVAVLAASFVLALYACEGFGKQLQLPWWGLLLACAIAFTFTLPIGVILATTNQRMGLNVISELIIGFLYPGKPLANVAFKTYGSVSIAQALYFVGDFKLGHYMKIPPRSMFIVQLVATIVASTVSFGTTWWLLSSVENICNTDMLPKSSPWTCPGDVVFYNASIIWGIIGPGRMFTSKGIYPGMNWFFLIGFLAPVPVWFFARKFPEKKWIHQIHIPLIFSGANVMPMAKAVHYWSWFAVGIVFNYYIFRRYKGWWARHNYILSAALDAGTAVMGVLIYFALQNNNISLPDWWGNENTDHCPLANCPTEKGIVAKGCPVF.

The next 15 helical transmembrane spans lie at threonine 56–tyrosine 76, proline 80–alanine 100, isoleucine 132–valine 152, alanine 163–phenylalanine 183, phenylalanine 224–proline 244, phenylalanine 296–isoleucine 316, tyrosine 368–isoleucine 388, tryptophan 432–phenylalanine 452, tryptophan 461–leucine 481, proline 506–glycine 528, phenylalanine 544–tryptophan 564, proline 583–glycine 603, proline 615–alanine 635, alanine 662–phenylalanine 682, and isoleucine 695–leucine 715.

It belongs to the oligopeptide OPT transporter (TC 2.A.67.1) family. As to expression, expressed predominantly in flowers, and at a very low level in leaves and roots.

It is found in the membrane. Functionally, involved in the translocation of tetra- and pentapeptides across the cellular membrane in an energy-dependent manner. In Arabidopsis thaliana (Mouse-ear cress), this protein is Oligopeptide transporter 5 (OPT5).